The sequence spans 366 residues: Nitronate monooxygenase (366 aa).

FMN is bound by residues Asn-74, Gln-181, Gly-186, Gly-223, and 242–245; that span reads QLGT.

It belongs to the nitronate monooxygenase family. NMO class I subfamily. FMN serves as cofactor.

The catalysed reaction is 3 propionate 3-nitronate + 3 O2 + H2O = 3 3-oxopropanoate + 2 nitrate + nitrite + H2O2 + 3 H(+). Nitronate monooxygenase that uses molecular oxygen to catalyze the oxidative denitrification of alkyl nitronates. Acts on propionate 3-nitronate (P3N), the presumed physiological substrate. Is likely involved in the degradation of P3N, that allows B.phytofirmans PsJN to grow on 3-nitropropionate/P3N as the sole source of nitrogen and carbon. Also probably functions in the detoxification of P3N, a metabolic poison produced by plants and fungi as a defense mechanism. Cannot oxidize nitroalkanes such as 3-nitropropionate, nitroethane, or 1-nitropropane. This chain is Nitronate monooxygenase, found in Paraburkholderia phytofirmans (strain DSM 17436 / LMG 22146 / PsJN) (Burkholderia phytofirmans).